We begin with the raw amino-acid sequence, 226 residues long: Cytidylate kinase (226 aa).

Position 10–18 (10–18 (GPASSGKST)) interacts with ATP.

Belongs to the cytidylate kinase family. Type 1 subfamily.

The protein localises to the cytoplasm. It carries out the reaction CMP + ATP = CDP + ADP. It catalyses the reaction dCMP + ATP = dCDP + ADP. This is Cytidylate kinase from Streptococcus pyogenes serotype M4 (strain MGAS10750).